A 352-amino-acid chain; its full sequence is Fructose-1,6-bisphosphatase class 1 (352 aa).

Residues E111, D133, I135, and D136 each coordinate Mg(2+). Residues 136 to 139 (DGSS), N228, Y256, and K286 each bind substrate. Mg(2+) is bound at residue E292.

This sequence belongs to the FBPase class 1 family. In terms of assembly, homotetramer. Mg(2+) serves as cofactor.

The protein localises to the cytoplasm. It carries out the reaction beta-D-fructose 1,6-bisphosphate + H2O = beta-D-fructose 6-phosphate + phosphate. The protein operates within carbohydrate biosynthesis; Calvin cycle. In Crocosphaera subtropica (strain ATCC 51142 / BH68) (Cyanothece sp. (strain ATCC 51142)), this protein is Fructose-1,6-bisphosphatase class 1.